The chain runs to 890 residues: MAETTVKEFAQTVGIPVERLQAQLEAAGLGRRDDGAALSAEDKATLLAHLRQGSPEQEEEGGGSDGSPKKITLKRRSHSQLKMPAGRDAGSRGPRQTRTVNVEVRKRRTYVKRSDIEAEEKRKQEEAEEAAAQLERALEQEEAKREEDAAEAQRAGDTAVTGGDEAEQAPSEEAAPAEEAEPSAADAEAVEESGVEVQAAEPEETAADETARAQAEALKEKPKSQQDEAKKREEERERKRAELEAKREREAEERAQRKQEAKPKKKKAEQPAGGRGAGARRGGKKRGGGTAAKQLQQEFERPTAPVVREVEIPETITVAELADRMSVKAAALIKEMMKQGVMATINQAIDQETAAILVEEMGHKPKLQRDDDVEEELLRQGEQPEGEQIGRAPVVTVMGHVDHGKTSLLDYIRRAKVASGEAGGITQHIGAYRVEGENGSATFLDTPGHQAFTAMRARGAQMTDIVVLVVAADDGVMPQTKEAVEHARAAEVPIVVAVNKMDKEDADPNRVKQELSQMEVIPEEWGGDVQFVHVSAMTGEGMDELIEAIVLQAELQELKAVKDCPARGVVLESSLDKGRGPVATVLVQNGYLHRGDTVISGTEFGRVRALVDEHGKRVNEAGPSTPVEVLGLSGLPDAGDDIMVVEDERKAREVAESRSERQREKRLAQQQAARMENLFSQMKEDEVSTINLLVKADVHGSAEALRQSLEDLSHEEVRVRVVSSGVGAITESDVNLALASEAIMIGFNVRADAAAKRMVQEHGVDLHYYSVIYDAIEQVKNAISGMLEPTLEEHILGTAEVREVFRSSKLGQVAGCLVVDGVVRRRNPIRVLRDSVVIYEGELESLRRFKDDVNEVRAGTECGIGVKNYNDVRAGDQIECYERVEVQRSL.

The tract at residues 50–304 (LRQGSPEQEE…LQQEFERPTA (255 aa)) is disordered. 3 stretches are compositionally biased toward basic and acidic residues: residues 112–125 (KRSDIEAEEKRKQE), 136–147 (RALEQEEAKREE), and 217–262 (ALKE…QEAK). Residues 390–559 (GRAPVVTVMG…VLQAELQELK (170 aa)) form the tr-type G domain. The interval 399–406 (GHVDHGKT) is G1. 399 to 406 (GHVDHGKT) provides a ligand contact to GTP. The tract at residues 424–428 (GITQH) is G2. The G3 stretch occupies residues 445–448 (DTPG). GTP-binding positions include 445-449 (DTPGH) and 499-502 (NKMD). The tract at residues 499-502 (NKMD) is G4. The interval 535-537 (SAM) is G5.

It belongs to the TRAFAC class translation factor GTPase superfamily. Classic translation factor GTPase family. IF-2 subfamily.

It localises to the cytoplasm. One of the essential components for the initiation of protein synthesis. Protects formylmethionyl-tRNA from spontaneous hydrolysis and promotes its binding to the 30S ribosomal subunits. Also involved in the hydrolysis of GTP during the formation of the 70S ribosomal complex. In Halorhodospira halophila (strain DSM 244 / SL1) (Ectothiorhodospira halophila (strain DSM 244 / SL1)), this protein is Translation initiation factor IF-2.